The primary structure comprises 472 residues: Maintenance of mitochondrial morphology protein 1 (472 aa).

At methionine 1–glycine 22 the chain is on the lumenal side. A helical membrane pass occupies residues phenylalanine 23–phenylalanine 43. Topologically, residues glycine 44 to glutamine 472 are cytoplasmic. Disordered stretches follow at residues serine 51–serine 92, leucine 270–serine 303, and arginine 370–glutamine 472. A compositionally biased stretch (polar residues) spans serine 81–serine 92. The region spanning glutamine 124–proline 365 is the SMP-LTD domain. Positions leucine 270–proline 280 are enriched in pro residues. Low complexity predominate over residues threonine 281–aspartate 297. The span at threonine 450–histidine 460 shows a compositional bias: basic and acidic residues.

Belongs to the MMM1 family. Homodimer. Component of the ER-mitochondria encounter structure (ERMES) or MDM complex, composed of mmm1, mdm10, mdm12 and mdm34. A mmm1 homodimer associates with one molecule of mdm12 on each side in a pairwise head-to-tail manner, and the SMP-LTD domains of mmm1 and mdm12 generate a continuous hydrophobic tunnel for phospholipid trafficking.

It is found in the endoplasmic reticulum membrane. Its function is as follows. Component of the ERMES/MDM complex, which serves as a molecular tether to connect the endoplasmic reticulum (ER) and mitochondria. Components of this complex are involved in the control of mitochondrial shape and protein biogenesis, and function in nonvesicular lipid trafficking between the ER and mitochondria. The mdm12-mmm1 subcomplex functions in the major beta-barrel assembly pathway that is responsible for biogenesis of all outer membrane beta-barrel proteins, and acts in a late step after the SAM complex. The mdm10-mdm12-mmm1 subcomplex further acts in the TOM40-specific pathway after the action of the mdm12-mmm1 complex. Essential for establishing and maintaining the structure of mitochondria and maintenance of mtDNA nucleoids. The protein is Maintenance of mitochondrial morphology protein 1 of Emericella nidulans (strain FGSC A4 / ATCC 38163 / CBS 112.46 / NRRL 194 / M139) (Aspergillus nidulans).